Consider the following 366-residue polypeptide: Protein U1 (366 aa).

It belongs to the herpesviridae US22 family.

This is Protein U1 (U1) from Human herpesvirus 6A (strain Uganda-1102) (HHV-6 variant A).